Reading from the N-terminus, the 385-residue chain is Succinate--CoA ligase [ADP-forming] subunit beta (385 aa).

Positions 9 to 240 constitute an ATP-grasp domain; the sequence is KEIFAKYGIP…ETQLPQLEVE (232 aa). ATP contacts are provided by residues K46, 53–55, E98, T101, and E106; that span reads GRG. Mg(2+)-binding residues include N195 and D209. Substrate is bound by residues N260 and 317–319; that span reads GIL.

It belongs to the succinate/malate CoA ligase beta subunit family. Heterotetramer of two alpha and two beta subunits. Requires Mg(2+) as cofactor.

It carries out the reaction succinate + ATP + CoA = succinyl-CoA + ADP + phosphate. The catalysed reaction is GTP + succinate + CoA = succinyl-CoA + GDP + phosphate. It functions in the pathway carbohydrate metabolism; tricarboxylic acid cycle; succinate from succinyl-CoA (ligase route): step 1/1. Functionally, succinyl-CoA synthetase functions in the citric acid cycle (TCA), coupling the hydrolysis of succinyl-CoA to the synthesis of either ATP or GTP and thus represents the only step of substrate-level phosphorylation in the TCA. The beta subunit provides nucleotide specificity of the enzyme and binds the substrate succinate, while the binding sites for coenzyme A and phosphate are found in the alpha subunit. The polypeptide is Succinate--CoA ligase [ADP-forming] subunit beta (Aquifex aeolicus (strain VF5)).